The following is a 361-amino-acid chain: Membrane-bound lytic murein transglycosylase B (361 aa).

The signal sequence occupies residues 1 to 18 (MFKRRYVTLLPLFVLLAA). C19 is lipidated: N-palmitoyl cysteine. The S-diacylglycerol cysteine moiety is linked to residue C19. Residue E162 is part of the active site.

Monomer.

The protein localises to the cell outer membrane. It catalyses the reaction Exolytic cleavage of the (1-&gt;4)-beta-glycosidic linkage between N-acetylmuramic acid (MurNAc) and N-acetylglucosamine (GlcNAc) residues in peptidoglycan, from either the reducing or the non-reducing ends of the peptidoglycan chains, with concomitant formation of a 1,6-anhydrobond in the MurNAc residue.. Functionally, murein-degrading enzyme. Catalyzes the cleavage of the glycosidic bonds between N-acetylmuramic acid and N-acetylglucosamine residues in peptidoglycan. May play a role in recycling of muropeptides during cell elongation and/or cell division. This Escherichia coli (strain K12) protein is Membrane-bound lytic murein transglycosylase B (mltB).